Consider the following 37-residue polypeptide: Large ribosomal subunit protein bL36c (37 aa).

Component of the chloroplast large ribosomal subunit (LSU). Mature 70S chloroplast ribosomes of higher plants consist of a small (30S) and a large (50S) subunit. The 30S small subunit contains 1 molecule of ribosomal RNA (16S rRNA) and 24 different proteins. The 50S large subunit contains 3 rRNA molecules (23S, 5S and 4.5S rRNA) and 33 different proteins.

It localises to the plastid. Its subcellular location is the chloroplast. In terms of biological role, component of the chloroplast ribosome (chloro-ribosome), a dedicated translation machinery responsible for the synthesis of chloroplast genome-encoded proteins, including proteins of the transcription and translation machinery and components of the photosynthetic apparatus. The sequence is that of Large ribosomal subunit protein bL36c (rpl36) from Spinacia oleracea (Spinach).